The chain runs to 39 residues: Potassium channel toxin alpha-KTx 2.24 (39 aa).

Cystine bridges form between Cys-7-Cys-29, Cys-13-Cys-34, and Cys-17-Cys-36.

The protein belongs to the short scorpion toxin superfamily. Potassium channel inhibitor family. Alpha-KTx 02 subfamily. Expressed by the venom gland.

It is found in the secreted. Its function is as follows. Blocks human voltage-gated potassium (Kv) channels Kv1.1/KCNA, Kv1.2/KCNA2 and Kv1.3/KCNA3. Exhibits high affinity for Kv1.2/KCNA2 and selectivity over Kv1.1/KCNA and Kv1.3/KCNA3. The chain is Potassium channel toxin alpha-KTx 2.24 from Centruroides bonito (Scorpion).